A 77-amino-acid chain; its full sequence is Large ribosomal subunit protein bL28 (77 aa).

This sequence belongs to the bacterial ribosomal protein bL28 family.

The protein is Large ribosomal subunit protein bL28 of Polynucleobacter necessarius subsp. necessarius (strain STIR1).